We begin with the raw amino-acid sequence, 2883 residues long: Bifunctional DNA-directed RNA polymerase subunit beta-beta' (2883 aa).

Residues 1–1377 (MPTTLKSGNR…DVTVYGETEE (1377 aa)) are DNA-directed RNA polymerase subunit beta. The interval 1382–2883 (PMPIKEDDRP…IRIKEKTEGA (1502 aa)) is DNA-directed RNA polymerase subunit beta'. Zn(2+)-binding residues include Cys-1447, Cys-1449, Cys-1462, and Cys-1465. Residues Asp-1846, Asp-1848, and Asp-1850 each coordinate Mg(2+). The Zn(2+) site is built by Cys-2176, Cys-2250, Cys-2257, and Cys-2260.

In the N-terminal section; belongs to the RNA polymerase beta chain family. It in the C-terminal section; belongs to the RNA polymerase beta' chain family. The RNAP catalytic core consists of 2 alpha, 1 beta/beta' and 1 omega subunit. When a sigma factor is associated with the core the holoenzyme is formed, which can initiate transcription. Mg(2+) is required as a cofactor. The cofactor is Zn(2+).

It carries out the reaction RNA(n) + a ribonucleoside 5'-triphosphate = RNA(n+1) + diphosphate. In terms of biological role, DNA-dependent RNA polymerase catalyzes the transcription of DNA into RNA using the four ribonucleoside triphosphates as substrates. The chain is Bifunctional DNA-directed RNA polymerase subunit beta-beta' (rpoBC) from Wolinella succinogenes (strain ATCC 29543 / DSM 1740 / CCUG 13145 / JCM 31913 / LMG 7466 / NCTC 11488 / FDC 602W) (Vibrio succinogenes).